The primary structure comprises 101 residues: Feather keratin Cos2-3 (101 aa).

Ser-2 is modified (N-acetylserine).

This sequence belongs to the avian keratin family. As to quaternary structure, the avian keratins (F-ker, S-ker, C-ker and B-ker) are a complex mixture of very similar polypeptides.

The chain is Feather keratin Cos2-3 from Columba livia (Rock dove).